We begin with the raw amino-acid sequence, 333 residues long: Ketol-acid reductoisomerase (NADP(+)) (333 aa).

The 181-residue stretch at 2–182 (AKLYYEKDCN…GGARAGVLKT (181 aa)) folds into the KARI N-terminal Rossmann domain. NADP(+) contacts are provided by residues 25–28 (YGSQ), serine 51, serine 53, and 83–86 (DEKQ). Histidine 108 is an active-site residue. Glycine 134 contacts NADP(+). The 146-residue stretch at 183 to 328 (TFKEETETDL…KELRDMMSWS (146 aa)) folds into the KARI C-terminal knotted domain. Residues aspartate 191, glutamate 195, glutamate 227, and glutamate 231 each contribute to the Mg(2+) site. A substrate-binding site is contributed by serine 252.

Belongs to the ketol-acid reductoisomerase family. Mg(2+) is required as a cofactor.

The catalysed reaction is (2R)-2,3-dihydroxy-3-methylbutanoate + NADP(+) = (2S)-2-acetolactate + NADPH + H(+). It catalyses the reaction (2R,3R)-2,3-dihydroxy-3-methylpentanoate + NADP(+) = (S)-2-ethyl-2-hydroxy-3-oxobutanoate + NADPH + H(+). It participates in amino-acid biosynthesis; L-isoleucine biosynthesis; L-isoleucine from 2-oxobutanoate: step 2/4. It functions in the pathway amino-acid biosynthesis; L-valine biosynthesis; L-valine from pyruvate: step 2/4. Involved in the biosynthesis of branched-chain amino acids (BCAA). Catalyzes an alkyl-migration followed by a ketol-acid reduction of (S)-2-acetolactate (S2AL) to yield (R)-2,3-dihydroxy-isovalerate. In the isomerase reaction, S2AL is rearranged via a Mg-dependent methyl migration to produce 3-hydroxy-3-methyl-2-ketobutyrate (HMKB). In the reductase reaction, this 2-ketoacid undergoes a metal-dependent reduction by NADPH to yield (R)-2,3-dihydroxy-isovalerate. The chain is Ketol-acid reductoisomerase (NADP(+)) from Alkaliphilus metalliredigens (strain QYMF).